The primary structure comprises 117 residues: Immunoglobulin heavy variable 1-2 (117 aa).

The signal sequence occupies residues Met1 to Ser19. Residue Gln20 is modified to Pyrrolidone carboxylic acid. Positions Gln20 to Ser44 are framework-1. The Ig-like domain occupies Gln20–Arg117. A disulfide bond links Cys41 and Cys115. Positions Gly45–Tyr52 are complementarity-determining-1. Residues Met53–Trp69 form a framework-2 region. Residues Ile70–Thr77 form a complementarity-determining-2 region. The interval Asn78–Cys115 is framework-3. Residues Ala116–Arg117 are complementarity-determining-3.

Immunoglobulins are composed of two identical heavy chains and two identical light chains; disulfide-linked.

The protein localises to the secreted. The protein resides in the cell membrane. In terms of biological role, v region of the variable domain of immunoglobulin heavy chains that participates in the antigen recognition. Immunoglobulins, also known as antibodies, are membrane-bound or secreted glycoproteins produced by B lymphocytes. In the recognition phase of humoral immunity, the membrane-bound immunoglobulins serve as receptors which, upon binding of a specific antigen, trigger the clonal expansion and differentiation of B lymphocytes into immunoglobulins-secreting plasma cells. Secreted immunoglobulins mediate the effector phase of humoral immunity, which results in the elimination of bound antigens. The antigen binding site is formed by the variable domain of one heavy chain, together with that of its associated light chain. Thus, each immunoglobulin has two antigen binding sites with remarkable affinity for a particular antigen. The variable domains are assembled by a process called V-(D)-J rearrangement and can then be subjected to somatic hypermutations which, after exposure to antigen and selection, allow affinity maturation for a particular antigen. The sequence is that of Immunoglobulin heavy variable 1-2 from Homo sapiens (Human).